We begin with the raw amino-acid sequence, 355 residues long: Isopentenyl-diphosphate delta-isomerase (355 aa).

12–13 (RK) contributes to the substrate binding site. FMN-binding positions include Ser-70, 71-73 (SMT), Ser-101, and Asn-130. 101-103 (SMR) contributes to the substrate binding site. Gln-165 is a substrate binding site. Residue Glu-166 coordinates Mg(2+). FMN contacts are provided by residues Lys-197 and 308-309 (AG).

It belongs to the IPP isomerase type 2 family. Homooctamer. Dimer of tetramers. It depends on FMN as a cofactor. The cofactor is NADPH. Mg(2+) serves as cofactor.

The protein localises to the cytoplasm. It catalyses the reaction isopentenyl diphosphate = dimethylallyl diphosphate. Involved in the biosynthesis of isoprenoids. Catalyzes the 1,3-allylic rearrangement of the homoallylic substrate isopentenyl (IPP) to its allylic isomer, dimethylallyl diphosphate (DMAPP). The protein is Isopentenyl-diphosphate delta-isomerase of Chlorobium phaeovibrioides (strain DSM 265 / 1930) (Prosthecochloris vibrioformis (strain DSM 265)).